We begin with the raw amino-acid sequence, 894 residues long: Eukaryotic translation initiation factor 3 subunit C (894 aa).

Disordered regions lie at residues Met-1–Lys-28 and Ser-162–Met-235. Composition is skewed to acidic residues over residues Ser-12–Glu-22, Asp-169–Pro-189, and Ser-203–Ser-214. The segment covering Phe-215–Asn-224 has biased composition (polar residues). Residues Tyr-625 to Pro-801 enclose the PCI domain. Residues Gln-824–Phe-894 are disordered. Residues Arg-845–Lys-854 show a composition bias toward basic and acidic residues. Over residues Gly-855 to Pro-870 the composition is skewed to gly residues. Residues Gln-884–Phe-894 are compositionally biased toward basic residues.

It belongs to the eIF-3 subunit C family. In terms of assembly, component of the eukaryotic translation initiation factor 3 (eIF-3) complex.

The protein resides in the cytoplasm. Functionally, component of the eukaryotic translation initiation factor 3 (eIF-3) complex, which is involved in protein synthesis of a specialized repertoire of mRNAs and, together with other initiation factors, stimulates binding of mRNA and methionyl-tRNAi to the 40S ribosome. The eIF-3 complex specifically targets and initiates translation of a subset of mRNAs involved in cell proliferation. This Caenorhabditis briggsae protein is Eukaryotic translation initiation factor 3 subunit C.